We begin with the raw amino-acid sequence, 298 residues long: Inosose dehydratase (298 aa).

This sequence belongs to the IolE/MocC family. The cofactor is glutathione. Co(2+) is required as a cofactor. Mn(2+) serves as cofactor.

It carries out the reaction scyllo-inosose = 3D-3,5/4-trihydroxycyclohexane-1,2-dione + H2O. It participates in polyol metabolism; myo-inositol degradation into acetyl-CoA; acetyl-CoA from myo-inositol: step 2/7. Functionally, catalyzes the dehydration of inosose (2-keto-myo-inositol, 2KMI or 2,4,6/3,5-pentahydroxycyclohexanone) to 3D-(3,5/4)-trihydroxycyclohexane-1,2-dione (D-2,3-diketo-4-deoxy-epi-inositol). The polypeptide is Inosose dehydratase (Bacillus velezensis (strain DSM 23117 / BGSC 10A6 / LMG 26770 / FZB42) (Bacillus amyloliquefaciens subsp. plantarum)).